Reading from the N-terminus, the 426-residue chain is Mothers against decapentaplegic homolog 7 (426 aa).

The tract at residues 14–42 is disordered; the sequence is WRSRAPGGEDEEEGVGGGGGGGELRGEGA. An N6-acetyllysine; alternate mark is found at K64 and K70. Residues K64 and K70 each participate in a glycyl lysine isopeptide (Lys-Gly) (interchain with G-Cter in ubiquitin); alternate cross-link. In terms of domain architecture, MH1 spans 64-207; that stretch reads KAVRGAKGHH…LSRLCELESP (144 aa). The span at 67–76 shows a compositional bias: basic residues; that stretch reads RGAKGHHHPH. Positions 67-87 are disordered; sequence RGAKGHHHPHPPTSGAGAAGG. 4 residues coordinate Zn(2+): C125, C180, C192, and H197. The PY-motif motif lies at 208–211; the sequence is PPPY. The interval 208 to 217 is important for interaction with SMURF2; it reads PPPYSRYPMD. S249 carries the phosphoserine modification. Residues 261-426 form the MH2 domain; sequence WCVVAYWEEK…CWLEVIFNSR (166 aa).

The protein belongs to the dwarfin/SMAD family. As to quaternary structure, interacts with COPS5. Interacts with STAMBP. Interacts with PPP1R15A. Interacts with NEDD4L. Interacts with RNF111, AXIN1 and AXIN2. Interacts with ACVR1B, SMURF1, SMURF2 and TGFBR1; SMAD7 recruits SMURF1 and SMURF2 to the TGF-beta receptor and regulates its degradation. Interacts with WWP1. Interacts with PDPK1 (via PH domain). Ubiquitinated by WWP1. Interacts with TSC22D1/TSC-22; the interaction requires TGF-beta and the interaction is inhibited by TGFBR1. Post-translationally, phosphorylation on Ser-249 does not affect its stability, nuclear localization or inhibitory function in TGFB signaling; however it affects its ability to regulate transcription. Phosphorylated by PDPK1. In terms of processing, ubiquitinated by WWP1. Polyubiquitinated by RNF111, which is enhanced by AXIN1 and promotes proteasomal degradation. In response to TGF-beta, ubiquitinated by SMURF1; which promotes its degradation. Ubiquitinated by ARK2C, promoting proteasomal degradation, leading to enhance the BMP-Smad signaling. Acetylation prevents ubiquitination and degradation mediated by SMURF1. In terms of tissue distribution, ubiquitous in various organs, with higher levels in brain and kidney.

The protein localises to the nucleus. The protein resides in the cytoplasm. Its function is as follows. Antagonist of signaling by TGF-beta (transforming growth factor) type 1 receptor superfamily members; has been shown to inhibit TGF-beta (Transforming growth factor) and activin signaling by associating with their receptors thus preventing SMAD2 access. Functions as an adapter to recruit SMURF2 to the TGF-beta receptor complex. Also acts by recruiting the PPP1R15A-PP1 complex to TGFBR1, which promotes its dephosphorylation. Positively regulates PDPK1 kinase activity by stimulating its dissociation from the 14-3-3 protein YWHAQ which acts as a negative regulator. The protein is Mothers against decapentaplegic homolog 7 (Smad7) of Mus musculus (Mouse).